A 99-amino-acid polypeptide reads, in one-letter code: Small ribosomal subunit protein uS14c (99 aa).

The disordered stretch occupies residues 46–66 (LQSSPRNSAPTRLHRRCSSTG).

This sequence belongs to the universal ribosomal protein uS14 family. As to quaternary structure, part of the 30S ribosomal subunit.

The protein localises to the plastid. It localises to the chloroplast. In terms of biological role, binds 16S rRNA, required for the assembly of 30S particles. The chain is Small ribosomal subunit protein uS14c from Pinus thunbergii (Japanese black pine).